Here is a 197-residue protein sequence, read N- to C-terminus: Phosphoheptose isomerase (197 aa).

In terms of domain architecture, SIS spans 37–197 (MLQCLMNDGK…CIDSVLLEGM (161 aa)). 52 to 54 (NGG) provides a ligand contact to substrate. The Zn(2+) site is built by H61 and E65. Substrate contacts are provided by residues E65, 94–95 (ND), 120–122 (STS), S125, and Q175. Residues Q175 and H183 each coordinate Zn(2+).

This sequence belongs to the SIS family. GmhA subfamily. As to quaternary structure, homotetramer. It depends on Zn(2+) as a cofactor.

The protein resides in the cytoplasm. It catalyses the reaction 2 D-sedoheptulose 7-phosphate = D-glycero-alpha-D-manno-heptose 7-phosphate + D-glycero-beta-D-manno-heptose 7-phosphate. The protein operates within carbohydrate biosynthesis; D-glycero-D-manno-heptose 7-phosphate biosynthesis; D-glycero-alpha-D-manno-heptose 7-phosphate and D-glycero-beta-D-manno-heptose 7-phosphate from sedoheptulose 7-phosphate: step 1/1. Catalyzes the isomerization of sedoheptulose 7-phosphate in D-glycero-D-manno-heptose 7-phosphate. The sequence is that of Phosphoheptose isomerase from Neisseria gonorrhoeae (strain ATCC 700825 / FA 1090).